The following is a 479-amino-acid chain: Probable cytosol aminopeptidase (479 aa).

Positions 251 and 256 each coordinate Mn(2+). K263 is an active-site residue. D274, D333, and E335 together coordinate Mn(2+). R337 is an active-site residue.

It belongs to the peptidase M17 family. Mn(2+) serves as cofactor.

The protein resides in the cytoplasm. The catalysed reaction is Release of an N-terminal amino acid, Xaa-|-Yaa-, in which Xaa is preferably Leu, but may be other amino acids including Pro although not Arg or Lys, and Yaa may be Pro. Amino acid amides and methyl esters are also readily hydrolyzed, but rates on arylamides are exceedingly low.. It carries out the reaction Release of an N-terminal amino acid, preferentially leucine, but not glutamic or aspartic acids.. Functionally, presumably involved in the processing and regular turnover of intracellular proteins. Catalyzes the removal of unsubstituted N-terminal amino acids from various peptides. In Albidiferax ferrireducens (strain ATCC BAA-621 / DSM 15236 / T118) (Rhodoferax ferrireducens), this protein is Probable cytosol aminopeptidase.